Consider the following 365-residue polypeptide: MGKVNEVLFMNRGEGEISYAQNSAFTQKVASMAMPALENAVETLFSKDFHLLQALTAADLGCAAGPNTFAVISTIKRMMEKKCRELYCQTLELQVYLNDLFGNDFNTLFKGLSSQVVGNKCEEVSCYVMGVPGSFHGRLFPRNSLHLVHSSYSVHWLTQAPKGLTSREGLALNKGKIYISKTSPPVVKKAYLSQFHEDFTMFLNARSQEVVPNGCMVLILHGRQSSDPSEMESCFTWELLAIAIAELVSQGLIDKDKLDTFNVPSYWPSLEEVKDIVERDGSFTIDHLEGFELDSLEMQEDDKWVRGDKFAKMVRAFTEPIISNQFGQEIMDKLYDKFTHILVSDLEAELPKTTSIILVLSKIVG.

An S-adenosyl-L-homocysteine-binding site is contributed by Tyr19. Thr26 serves as a coordination point for caffeine. Positions 62, 67, 99, 100, 134, and 135 each coordinate S-adenosyl-L-homocysteine. The caffeine site is built by Tyr152, His155, and Trp156. Mg(2+) is bound at residue Asn173. His221 contacts caffeine. Residues Asp259, Phe261, and Asn262 each contribute to the Mg(2+) site. Phe317 lines the caffeine pocket.

This sequence belongs to the methyltransferase superfamily. Type-7 methyltransferase family. It depends on Mg(2+) as a cofactor.

The catalysed reaction is 1,7-dimethylxanthine + S-adenosyl-L-methionine = caffeine + S-adenosyl-L-homocysteine + H(+). It catalyses the reaction 7-methylxanthine + S-adenosyl-L-methionine = theobromine + S-adenosyl-L-homocysteine + H(+). The protein operates within alkaloid biosynthesis. Functionally, involved in the biosynthesis of caffeine. Catalyzes the conversion of 7-methylxanthine (7mX) to theobromine, and, to some extent, the conversion of paraxanthine to caffeine, but seems not able to convert theobromine to caffeine. In Camellia ptilophylla (Cocoa tea), this protein is 7-methylxanthine methyltransferase PCS1.